The primary structure comprises 401 residues: L-rhamnonate dehydratase (401 aa).

Residues H29 and R55 each coordinate substrate. Mg(2+) contacts are provided by D222, E248, and E276. Residue H325 is the Proton acceptor of the active site. Substrate is bound at residue E345.

Belongs to the mandelate racemase/muconate lactonizing enzyme family. RhamD subfamily. Homooctamer; tetramer of dimers. Requires Mg(2+) as cofactor.

It carries out the reaction L-rhamnonate = 2-dehydro-3-deoxy-L-rhamnonate + H2O. In terms of biological role, catalyzes the dehydration of L-rhamnonate to 2-keto-3-deoxy-L-rhamnonate (KDR). The sequence is that of L-rhamnonate dehydratase from Salmonella schwarzengrund (strain CVM19633).